We begin with the raw amino-acid sequence, 331 residues long: 6-phosphogluconolactonase (331 aa).

Belongs to the cycloisomerase 2 family.

It carries out the reaction 6-phospho-D-glucono-1,5-lactone + H2O = 6-phospho-D-gluconate + H(+). It participates in carbohydrate degradation; pentose phosphate pathway; D-ribulose 5-phosphate from D-glucose 6-phosphate (oxidative stage): step 2/3. Its function is as follows. Catalyzes the hydrolysis of 6-phosphogluconolactone to 6-phosphogluconate. The chain is 6-phosphogluconolactonase from Enterobacter sp. (strain 638).